The primary structure comprises 119 residues: NADH dehydrogenase [ubiquinone] 1 subunit C2 (119 aa).

A helical transmembrane segment spans residues 56 to 75 (GLHRQLLYITAFFFAGYYLV).

It belongs to the complex I NDUFC2 subunit family. In terms of assembly, complex I is composed of 45 different subunits. Interacts with TMEM242.

Its subcellular location is the mitochondrion inner membrane. In terms of biological role, accessory subunit of the mitochondrial membrane respiratory chain NADH dehydrogenase (Complex I), that is believed not to be involved in catalysis but required for the complex assembly. Complex I functions in the transfer of electrons from NADH to the respiratory chain. The immediate electron acceptor for the enzyme is believed to be ubiquinone. The polypeptide is NADH dehydrogenase [ubiquinone] 1 subunit C2 (Gorilla gorilla gorilla (Western lowland gorilla)).